The sequence spans 96 residues: Aspartyl/glutamyl-tRNA(Asn/Gln) amidotransferase subunit C (96 aa).

It belongs to the GatC family. In terms of assembly, heterotrimer of A, B and C subunits.

The enzyme catalyses L-glutamyl-tRNA(Gln) + L-glutamine + ATP + H2O = L-glutaminyl-tRNA(Gln) + L-glutamate + ADP + phosphate + H(+). It carries out the reaction L-aspartyl-tRNA(Asn) + L-glutamine + ATP + H2O = L-asparaginyl-tRNA(Asn) + L-glutamate + ADP + phosphate + 2 H(+). Allows the formation of correctly charged Asn-tRNA(Asn) or Gln-tRNA(Gln) through the transamidation of misacylated Asp-tRNA(Asn) or Glu-tRNA(Gln) in organisms which lack either or both of asparaginyl-tRNA or glutaminyl-tRNA synthetases. The reaction takes place in the presence of glutamine and ATP through an activated phospho-Asp-tRNA(Asn) or phospho-Glu-tRNA(Gln). This chain is Aspartyl/glutamyl-tRNA(Asn/Gln) amidotransferase subunit C, found in Herpetosiphon aurantiacus (strain ATCC 23779 / DSM 785 / 114-95).